The sequence spans 430 residues: Serine--tRNA ligase (430 aa).

237-239 (TAE) contributes to the L-serine binding site. Residue 268-270 (RSE) coordinates ATP. Glu291 contributes to the L-serine binding site. Residue 355-358 (EISS) participates in ATP binding. Ser391 contributes to the L-serine binding site.

The protein belongs to the class-II aminoacyl-tRNA synthetase family. Type-1 seryl-tRNA synthetase subfamily. In terms of assembly, homodimer. The tRNA molecule binds across the dimer.

Its subcellular location is the cytoplasm. It carries out the reaction tRNA(Ser) + L-serine + ATP = L-seryl-tRNA(Ser) + AMP + diphosphate + H(+). It catalyses the reaction tRNA(Sec) + L-serine + ATP = L-seryl-tRNA(Sec) + AMP + diphosphate + H(+). It functions in the pathway aminoacyl-tRNA biosynthesis; selenocysteinyl-tRNA(Sec) biosynthesis; L-seryl-tRNA(Sec) from L-serine and tRNA(Sec): step 1/1. Functionally, catalyzes the attachment of serine to tRNA(Ser). Is also able to aminoacylate tRNA(Sec) with serine, to form the misacylated tRNA L-seryl-tRNA(Sec), which will be further converted into selenocysteinyl-tRNA(Sec). The sequence is that of Serine--tRNA ligase from Salmonella schwarzengrund (strain CVM19633).